The sequence spans 420 residues: Trophoblast glycoprotein (420 aa).

A signal peptide spans 1-31; that stretch reads MPGGCSRGPAAGDGRLRLARLALVLLGWVSS. The Extracellular segment spans residues 32 to 355; sequence SSPTSSASSF…PILPPSLQTS (324 aa). In terms of domain architecture, LRRNT spans 53–91; the sequence is SAQPPLPDQCPALCECSEAARTVKCVNRNLTEVPTDLPA. 2 disulfide bridges follow: cysteine 62–cysteine 68 and cysteine 66–cysteine 77. A glycan (N-linked (GlcNAc...) asparagine) is linked at asparagine 81. LRR repeat units lie at residues 92-113, 116-139, 141-163, 172-204, 209-232, 233-255, and 256-275; these read YVRNLFLTGNQLAVLPAGAFAR, PLAELAALNLSGSRLDEVRAGAFE, LPSLRQLDLSHNPLADLSPFAFS, PSPLVELILNHIVPPEDERQNRSFEGMVVAALL, LQGLRRLELASNHFLYLPRDVLAQ, LPSLRHLDLSNNSLVSLTYVSFR, and NLTHLESLHLEDNALKVLHN. The N-linked (GlcNAc...) asparagine glycan is linked to asparagine 124. N-linked (GlcNAc...) asparagine glycosylation is present at asparagine 275. The LRRCT domain maps to 283–346; it reads GLPHIRVFLD…LNSADLDCDP (64 aa). 2 disulfides stabilise this stretch: cysteine 298–cysteine 323 and cysteine 300–cysteine 344. A helical membrane pass occupies residues 356–376; that stretch reads YVFLGIVLALIGAIFLLVLYL. Over 377 to 420 the chain is Cytoplasmic; that stretch reads NRKGIKKWMHNIRDACRDHMEGYHYRYEINADPRLTNLSSNSDV. Serine 418 bears the Phosphoserine mark.

In terms of processing, highly glycosylated. As to expression, expressed by all types of trophoblasts as early as 9 weeks of development. Specific for trophoblastic cells except for amniotic epithelium. In adult tissues, the expression is limited to a few epithelial cell types but is found on a variety of carcinoma.

The protein resides in the cell membrane. Functionally, may function as an inhibitor of Wnt/beta-catenin signaling by indirectly interacting with LRP6 and blocking Wnt3a-dependent LRP6 internalization. The sequence is that of Trophoblast glycoprotein (TPBG) from Homo sapiens (Human).